Reading from the N-terminus, the 163-residue chain is Cyanate hydratase (163 aa).

Catalysis depends on residues arginine 103, glutamate 106, and serine 129.

The protein belongs to the cyanase family.

The catalysed reaction is cyanate + hydrogencarbonate + 3 H(+) = NH4(+) + 2 CO2. Functionally, catalyzes the reaction of cyanate with bicarbonate to produce ammonia and carbon dioxide. This is Cyanate hydratase from Talaromyces marneffei (strain ATCC 18224 / CBS 334.59 / QM 7333) (Penicillium marneffei).